Reading from the N-terminus, the 562-residue chain is Acetolactate synthase isozyme 1 large subunit (562 aa).

Glu60 contributes to the thiamine diphosphate binding site. FAD is bound by residues Arg162, 264-285 (HGVR…LGAR), and 307-326 (DIDR…IQAD). The interval 393-473 (QHQMWTAQAY…VKIILMNNEA (81 aa)) is thiamine pyrophosphate binding. 2 residues coordinate Mg(2+): Asp444 and Asn471.

This sequence belongs to the TPP enzyme family. As to quaternary structure, dimer of large and small chains. Requires Mg(2+) as cofactor. The cofactor is thiamine diphosphate.

It carries out the reaction 2 pyruvate + H(+) = (2S)-2-acetolactate + CO2. It participates in amino-acid biosynthesis; L-isoleucine biosynthesis; L-isoleucine from 2-oxobutanoate: step 1/4. The protein operates within amino-acid biosynthesis; L-valine biosynthesis; L-valine from pyruvate: step 1/4. The chain is Acetolactate synthase isozyme 1 large subunit (ilvB) from Escherichia coli (strain K12).